The sequence spans 673 residues: UvrABC system protein B (673 aa).

In terms of domain architecture, Helicase ATP-binding spans 26-183 (EGLEDGLAHQ…RRLAELQYTR (158 aa)). Residue 39–46 (GVTGSGKT) participates in ATP binding. The short motif at 92-115 (YYDYYQPEAYVPSSDTFIEKDASV) is the Beta-hairpin element. Residues 431–597 (QVDDLLSEIR…GLNKKVVDIL (167 aa)) enclose the Helicase C-terminal domain. Positions 633 to 668 (QQKIHELEGQMMQHAQNLEFEEAAQIRDQLHQLREL) constitute a UVR domain.

Belongs to the UvrB family. As to quaternary structure, forms a heterotetramer with UvrA during the search for lesions. Interacts with UvrC in an incision complex.

Its subcellular location is the cytoplasm. The UvrABC repair system catalyzes the recognition and processing of DNA lesions. A damage recognition complex composed of 2 UvrA and 2 UvrB subunits scans DNA for abnormalities. Upon binding of the UvrA(2)B(2) complex to a putative damaged site, the DNA wraps around one UvrB monomer. DNA wrap is dependent on ATP binding by UvrB and probably causes local melting of the DNA helix, facilitating insertion of UvrB beta-hairpin between the DNA strands. Then UvrB probes one DNA strand for the presence of a lesion. If a lesion is found the UvrA subunits dissociate and the UvrB-DNA preincision complex is formed. This complex is subsequently bound by UvrC and the second UvrB is released. If no lesion is found, the DNA wraps around the other UvrB subunit that will check the other stand for damage. This is UvrABC system protein B from Salmonella arizonae (strain ATCC BAA-731 / CDC346-86 / RSK2980).